Here is a 338-residue protein sequence, read N- to C-terminus: S-adenosylmethionine:tRNA ribosyltransferase-isomerase (338 aa).

The protein belongs to the QueA family. Monomer.

It localises to the cytoplasm. It carries out the reaction 7-aminomethyl-7-carbaguanosine(34) in tRNA + S-adenosyl-L-methionine = epoxyqueuosine(34) in tRNA + adenine + L-methionine + 2 H(+). It functions in the pathway tRNA modification; tRNA-queuosine biosynthesis. Its function is as follows. Transfers and isomerizes the ribose moiety from AdoMet to the 7-aminomethyl group of 7-deazaguanine (preQ1-tRNA) to give epoxyqueuosine (oQ-tRNA). This chain is S-adenosylmethionine:tRNA ribosyltransferase-isomerase, found in Francisella philomiragia subsp. philomiragia (strain ATCC 25017 / CCUG 19701 / FSC 153 / O#319-036).